A 125-amino-acid polypeptide reads, in one-letter code: Glycine cleavage system H protein (125 aa).

Residues 19-101 enclose the Lipoyl-binding domain; that stretch reads IATIGITDYA…MGDGWFIKLR (83 aa). K60 carries the N6-lipoyllysine modification.

The protein belongs to the GcvH family. The glycine cleavage system is composed of four proteins: P, T, L and H. (R)-lipoate serves as cofactor.

In terms of biological role, the glycine cleavage system catalyzes the degradation of glycine. The H protein shuttles the methylamine group of glycine from the P protein to the T protein. The sequence is that of Glycine cleavage system H protein from Parvibaculum lavamentivorans (strain DS-1 / DSM 13023 / NCIMB 13966).